The following is a 274-amino-acid chain: Penicillin-insensitive murein endopeptidase (274 aa).

The signal sequence occupies residues 1 to 19 (MKKTAIALLAWFVSSASLA). Disulfide bonds link cysteine 44-cysteine 265, cysteine 187-cysteine 235, and cysteine 216-cysteine 223. 6 residues coordinate Zn(2+): histidine 110, histidine 113, aspartate 120, aspartate 147, histidine 150, and histidine 211. The disordered stretch occupies residues 225–274 (DQPLPPPGDGCGAELQSWFEPPKPGTTKPEKKTPPPLPPSCQALLDEHVL).

It belongs to the peptidase M74 family. In terms of assembly, dimer. It depends on Zn(2+) as a cofactor.

Its subcellular location is the periplasm. Its function is as follows. Murein endopeptidase that cleaves the D-alanyl-meso-2,6-diamino-pimelyl amide bond that connects peptidoglycan strands. Likely plays a role in the removal of murein from the sacculus. The protein is Penicillin-insensitive murein endopeptidase of Salmonella heidelberg (strain SL476).